Here is a 164-residue protein sequence, read N- to C-terminus: R-phycoerythrin alpha chain (164 aa).

Residues N47, K81, C82, R84, H88, R137, C139, and R142 each coordinate (2R,3E)-phycoerythrobilin.

Belongs to the phycobiliprotein family. Heterododecamer of 6 alpha and 6 beta chains. The basic functional unit of phycobiliproteins is a ring-shaped hexamer formed from two back-to-back trimers contacting via the alpha chain subunits. The trimers are composed of alpha/beta subunit heterodimers arranged around a three-fold axis of symmetry. The phycoerythrins also contain a gamma subunit which is located in the center of the hexamer. In terms of processing, contains two covalently linked phycoerythrobilin chromophores.

The protein localises to the plastid. It is found in the chloroplast thylakoid membrane. In terms of biological role, light-harvesting photosynthetic tetrapyrrole chromophore-protein from the phycobiliprotein complex. This is R-phycoerythrin alpha chain (cpeA) from Griffithsia monilis (Red alga).